A 188-amino-acid chain; its full sequence is Elongation factor P (188 aa).

Belongs to the elongation factor P family.

The protein localises to the cytoplasm. It participates in protein biosynthesis; polypeptide chain elongation. Involved in peptide bond synthesis. Stimulates efficient translation and peptide-bond synthesis on native or reconstituted 70S ribosomes in vitro. Probably functions indirectly by altering the affinity of the ribosome for aminoacyl-tRNA, thus increasing their reactivity as acceptors for peptidyl transferase. The protein is Elongation factor P of Chloroherpeton thalassium (strain ATCC 35110 / GB-78).